The sequence spans 207 residues: GTP-binding protein RHO1 (207 aa).

18-25 serves as a coordination point for GTP; that stretch reads GDGACGKT. The Effector region signature appears at 40-48; the sequence is YVPTVFDNY. Residues 65–69 and 123–126 contribute to the GTP site; these read DTAGQ and CKAD. The disordered stretch occupies residues 187–207; it reads GKQGKSKAKSDKKKKKKCVVL. Positions 190 to 207 are enriched in basic residues; sequence GKSKAKSDKKKKKKCVVL. Position 204 is a cysteine methyl ester (Cys204). A lipid anchor (S-geranylgeranyl cysteine) is attached at Cys204. Positions 205 to 207 are cleaved as a propeptide — removed in mature form; the sequence is VVL.

Belongs to the small GTPase superfamily. Rho family.

The protein localises to the cell membrane. In terms of biological role, involved in the regulation of actin polarization. Rho proteins are required for distinct steps during polarized hyphal growth of A.gossypii. The chain is GTP-binding protein RHO1 (RHO1) from Eremothecium gossypii (strain ATCC 10895 / CBS 109.51 / FGSC 9923 / NRRL Y-1056) (Yeast).